Here is a 124-residue protein sequence, read N- to C-terminus: Small ribosomal subunit protein uS12 (124 aa).

The tract at residues 1–20 (MPTIQQLVRKGRTPKVVKTK) is disordered. Basic residues predominate over residues 9-18 (RKGRTPKVVK). At Asp-89 the chain carries 3-methylthioaspartic acid.

It belongs to the universal ribosomal protein uS12 family. As to quaternary structure, part of the 30S ribosomal subunit. Contacts proteins S8 and S17. May interact with IF1 in the 30S initiation complex.

With S4 and S5 plays an important role in translational accuracy. Its function is as follows. Interacts with and stabilizes bases of the 16S rRNA that are involved in tRNA selection in the A site and with the mRNA backbone. Located at the interface of the 30S and 50S subunits, it traverses the body of the 30S subunit contacting proteins on the other side and probably holding the rRNA structure together. The combined cluster of proteins S8, S12 and S17 appears to hold together the shoulder and platform of the 30S subunit. This chain is Small ribosomal subunit protein uS12, found in Clavibacter michiganensis subsp. michiganensis (strain NCPPB 382).